A 2075-amino-acid chain; its full sequence is Autophagy-related protein 2 homolog B (2075 aa).

In terms of domain architecture, Chorein N-terminal spans 13-107 (ACRYLLQRYL…LEMVFRPRPR (95 aa)). S255, S379, S496, S839, S885, S898, and S1007 each carry phosphoserine. At Y1011 the chain carries Phosphotyrosine. Phosphoserine occurs at positions 1015 and 1017. T1021 carries the post-translational modification Phosphothreonine. Residues 1373 to 1403 (KAEMKPGVPQRKPKVDSSARSSSHGPVLPEA) are disordered. S1525 is subject to Phosphoserine. Disordered stretches follow at residues 1570–1593 (TSPA…GRHT), 1759–1792 (EPNL…EDVS), and 2055–2075 (RNQI…HGED). The span at 1578–1587 (PHSSPSQTPT) shows a compositional bias: polar residues. Over residues 2058 to 2075 (IRPDVRQDESQKWRHGED) the composition is skewed to basic and acidic residues.

This sequence belongs to the ATG2 family. Interacts with WDR45/WIPI4.

The protein localises to the preautophagosomal structure membrane. The protein resides in the lipid droplet. Its subcellular location is the endoplasmic reticulum membrane. The enzyme catalyses a 1,2-diacyl-sn-glycero-3-phospho-L-serine(in) = a 1,2-diacyl-sn-glycero-3-phospho-L-serine(out). The catalysed reaction is a 1,2-diacyl-sn-glycero-3-phosphoethanolamine(in) = a 1,2-diacyl-sn-glycero-3-phosphoethanolamine(out). Functionally, lipid transfer protein required for both autophagosome formation and regulation of lipid droplet morphology and dispersion. Tethers the edge of the isolation membrane (IM) to the endoplasmic reticulum (ER) and mediates direct lipid transfer from ER to IM for IM expansion. Binds to the ER exit site (ERES), which is the membrane source for autophagosome formation, and extracts phospholipids from the membrane source and transfers them to ATG9 (ATG9A or ATG9B) to the IM for membrane expansion. Lipid transfer activity is enhanced by WDR45/WIPI4, which promotes ATG2B-association with phosphatidylinositol 3-monophosphate (PI3P)-containing membranes. This chain is Autophagy-related protein 2 homolog B, found in Mus musculus (Mouse).